Consider the following 304-residue polypeptide: Glyceraldehyde-3-phosphate dehydrogenase 2 (304 aa).

NAD(+) is bound by residues 1 to 2, Asp-22, and Arg-67; that span reads RI. Residues 138–140, Thr-169, 198–199, and Arg-221 contribute to the D-glyceraldehyde 3-phosphate site; these read SCT and TG. Cys-139 acts as the Nucleophile in catalysis. Asn-303 provides a ligand contact to NAD(+).

This sequence belongs to the glyceraldehyde-3-phosphate dehydrogenase family. Homotetramer.

Its subcellular location is the cytoplasm. It carries out the reaction D-glyceraldehyde 3-phosphate + phosphate + NAD(+) = (2R)-3-phospho-glyceroyl phosphate + NADH + H(+). Its pathway is carbohydrate degradation; glycolysis; pyruvate from D-glyceraldehyde 3-phosphate: step 1/5. In Drosophila subobscura (Fruit fly), this protein is Glyceraldehyde-3-phosphate dehydrogenase 2 (Gapdh2).